We begin with the raw amino-acid sequence, 259 residues long: Ribonuclease HII (259 aa).

In terms of domain architecture, RNase H type-2 spans 70–258 (TLIVGIDEVG…VKSLVLGKKE (189 aa)). A divalent metal cation contacts are provided by Asp76, Glu77, and Asp168.

It belongs to the RNase HII family. It depends on Mn(2+) as a cofactor. Mg(2+) is required as a cofactor.

The protein localises to the cytoplasm. It catalyses the reaction Endonucleolytic cleavage to 5'-phosphomonoester.. Endonuclease that specifically degrades the RNA of RNA-DNA hybrids. In Streptococcus pneumoniae serotype 2 (strain D39 / NCTC 7466), this protein is Ribonuclease HII.